The chain runs to 459 residues: Xylose/arabinose-binding protein XacG (459 aa).

A helical transmembrane segment spans residues Ala-19–Gly-36. The segment at Gly-27–Trp-68 is disordered.

Belongs to the bacterial solute-binding protein 1 family. In terms of assembly, the complex is composed of two ATP-binding proteins (XacJ and XacK), two transmembrane proteins (XacH and XacI) and a solute-binding protein (XacG).

The protein resides in the cell membrane. Part of the ABC transporter complex XacGHIJK involved in the uptake of xylose and arabinose. The chain is Xylose/arabinose-binding protein XacG from Haloferax volcanii (strain ATCC 29605 / DSM 3757 / JCM 8879 / NBRC 14742 / NCIMB 2012 / VKM B-1768 / DS2) (Halobacterium volcanii).